A 265-amino-acid chain; its full sequence is MSFDDGVVKAQTDPFALKRGGHNVQKWTSYALFKLFKEFRINKNYSKLIDFLTENFPNNVKNKTFNFSSTGHLFHSLHAYVPSVSDLVKERKQIRLQTEYLAKLFNNTINDFKLYTELYEFIERTEGVDCCCPCQLLHKSLLNTKNYVENLNCKLFDIKPPKFKKEPFDNILYKYSLNYKSLLLKKKEKHTSTGCTRKKKIKHRQILNDKVIYLQNSNKNKLFELSGLSLKSCRHDFVTVESQTRAGDEIASFIRYCRLCGMSGC.

Belongs to the baculoviridae LEF-5 family. Interacts (via N-terminus) with itself.

Its subcellular location is the host nucleus. Functionally, plays a role in the transcription of late viral genes. May function as an transcriptional initiation factor. The protein is Late expression factor 5 (LEF-5) of Lepidoptera (butterflies and moths).